A 616-amino-acid chain; its full sequence is Homeodomain-interacting protein kinase 4 (616 aa).

The Protein kinase domain occupies 11–347 (YDIIEVLGKG…PSAALRHPFV (337 aa)). ATP is bound by residues 17 to 25 (LGKGTFGEV) and lysine 40. Aspartate 136 functions as the Proton acceptor in the catalytic mechanism. The segment at 485–616 (RHKARKPPAG…SFLQHVTGHH (132 aa)) is disordered. Polar residues predominate over residues 496 to 511 (KSDSNLSNLIRLSQVS). At serine 511 the chain carries Phosphoserine.

The protein belongs to the protein kinase superfamily. CMGC Ser/Thr protein kinase family. HIPK subfamily. Autophosphorylated.

The protein localises to the cytoplasm. It catalyses the reaction L-seryl-[protein] + ATP = O-phospho-L-seryl-[protein] + ADP + H(+). The enzyme catalyses L-threonyl-[protein] + ATP = O-phospho-L-threonyl-[protein] + ADP + H(+). In terms of biological role, protein kinase that phosphorylates TP53, and thus induces TP53 repression of BIRC5 promoter. May act as a corepressor of transcription factors (Potential). The sequence is that of Homeodomain-interacting protein kinase 4 (HIPK4) from Macaca fascicularis (Crab-eating macaque).